A 393-amino-acid polypeptide reads, in one-letter code: Protein TsgA (393 aa).

12 consecutive transmembrane segments (helical) span residues 11-31, 51-71, 78-98, 101-121, 140-160, 162-182, 206-226, 245-265, 273-293, 297-317, 332-352, and 361-381; these read WISF…GMVM, FLNA…EIVP, FGFL…SLAL, TAMF…TFLI, FFSM…AHSI, WYWV…LTFG, IGVL…LGFI, TLVS…SFIL, ILTV…TGTP, AWSI…IITL, FVLT…GPIV, and LLTA…LGFV.

It belongs to the major facilitator superfamily. TsgA family.

The protein localises to the cell inner membrane. This is Protein TsgA from Shigella boydii serotype 18 (strain CDC 3083-94 / BS512).